A 257-amino-acid polypeptide reads, in one-letter code: Imidazole glycerol phosphate synthase subunit HisF (257 aa).

Active-site residues include D12 and D131.

Belongs to the HisA/HisF family. As to quaternary structure, heterodimer of HisH and HisF.

It localises to the cytoplasm. The catalysed reaction is 5-[(5-phospho-1-deoxy-D-ribulos-1-ylimino)methylamino]-1-(5-phospho-beta-D-ribosyl)imidazole-4-carboxamide + L-glutamine = D-erythro-1-(imidazol-4-yl)glycerol 3-phosphate + 5-amino-1-(5-phospho-beta-D-ribosyl)imidazole-4-carboxamide + L-glutamate + H(+). The protein operates within amino-acid biosynthesis; L-histidine biosynthesis; L-histidine from 5-phospho-alpha-D-ribose 1-diphosphate: step 5/9. IGPS catalyzes the conversion of PRFAR and glutamine to IGP, AICAR and glutamate. The HisF subunit catalyzes the cyclization activity that produces IGP and AICAR from PRFAR using the ammonia provided by the HisH subunit. The polypeptide is Imidazole glycerol phosphate synthase subunit HisF (Burkholderia vietnamiensis (strain G4 / LMG 22486) (Burkholderia cepacia (strain R1808))).